The chain runs to 520 residues: Aldehyde dehydrogenase 5, mitochondrial (520 aa).

The N-terminal 23 residues, 1 to 23 (MLSRTRAAAPNSRIFTRSLLRLY), are a transit peptide targeting the mitochondrion. Position 266–271 (266–271 (GSTATG)) interacts with NAD(+). The active-site Proton acceptor is the glutamate 288. Cysteine 322 acts as the Nucleophile in catalysis.

It belongs to the aldehyde dehydrogenase family.

It localises to the mitochondrion matrix. The enzyme catalyses an aldehyde + NADP(+) + H2O = a carboxylate + NADPH + 2 H(+). It catalyses the reaction an aldehyde + NAD(+) + H2O = a carboxylate + NADH + 2 H(+). It participates in alcohol metabolism; ethanol degradation; acetate from ethanol: step 2/2. Induced by potassium ions. In terms of biological role, minor mitochondrial aldehyde dehydrogenase isoform. Plays a role in regulation or biosynthesis of electron transport chain components. Involved in the biosynthesis of acetate during anaerobic growth on glucose. The protein is Aldehyde dehydrogenase 5, mitochondrial (ALD5) of Saccharomyces cerevisiae (strain YJM789) (Baker's yeast).